We begin with the raw amino-acid sequence, 173 residues long: Bifunctional protein PyrR (173 aa).

The PRPP-binding motif lies at 93-105 (VILIDDVLYTGRT).

The protein belongs to the purine/pyrimidine phosphoribosyltransferase family. PyrR subfamily. As to quaternary structure, homodimer and homohexamer; in equilibrium.

The catalysed reaction is UMP + diphosphate = 5-phospho-alpha-D-ribose 1-diphosphate + uracil. Regulates transcriptional attenuation of the pyrimidine nucleotide (pyr) operon by binding in a uridine-dependent manner to specific sites on pyr mRNA. This disrupts an antiterminator hairpin in the RNA and favors formation of a downstream transcription terminator, leading to a reduced expression of downstream genes. Its function is as follows. Also displays a weak uracil phosphoribosyltransferase activity which is not physiologically significant. This is Bifunctional protein PyrR from Streptococcus pyogenes serotype M12 (strain MGAS2096).